A 549-amino-acid chain; its full sequence is Probable protein kinase UbiB (549 aa).

Positions 123–504 constitute a Protein kinase domain; that stretch reads DFDETALASA…QRNNTGFSRL (382 aa). ATP-binding positions include 129 to 137 and lysine 156; that span reads LASASIAQV. Aspartate 291 serves as the catalytic Proton acceptor. Residues 505 to 525 form a helical membrane-spanning segment; it reads MILGIAIAGTFWKFEMLPLWV.

The protein belongs to the ABC1 family. UbiB subfamily.

The protein localises to the cell inner membrane. It functions in the pathway cofactor biosynthesis; ubiquinone biosynthesis [regulation]. Is probably a protein kinase regulator of UbiI activity which is involved in aerobic coenzyme Q (ubiquinone) biosynthesis. This chain is Probable protein kinase UbiB, found in Glaesserella parasuis serovar 5 (strain SH0165) (Haemophilus parasuis).